The sequence spans 414 residues: Serine hydroxymethyltransferase (414 aa).

Residues Leu116 and 120 to 122 (GHL) each bind (6S)-5,6,7,8-tetrahydrofolate. Lys224 is modified (N6-(pyridoxal phosphate)lysine). (6S)-5,6,7,8-tetrahydrofolate-binding positions include Glu240 and 348-350 (SPF).

This sequence belongs to the SHMT family. Homodimer. Requires pyridoxal 5'-phosphate as cofactor.

Its subcellular location is the cytoplasm. It carries out the reaction (6R)-5,10-methylene-5,6,7,8-tetrahydrofolate + glycine + H2O = (6S)-5,6,7,8-tetrahydrofolate + L-serine. Its pathway is one-carbon metabolism; tetrahydrofolate interconversion. It functions in the pathway amino-acid biosynthesis; glycine biosynthesis; glycine from L-serine: step 1/1. Its function is as follows. Catalyzes the reversible interconversion of serine and glycine with tetrahydrofolate (THF) serving as the one-carbon carrier. This reaction serves as the major source of one-carbon groups required for the biosynthesis of purines, thymidylate, methionine, and other important biomolecules. Also exhibits THF-independent aldolase activity toward beta-hydroxyamino acids, producing glycine and aldehydes, via a retro-aldol mechanism. The chain is Serine hydroxymethyltransferase from Campylobacter concisus (strain 13826).